The following is a 374-amino-acid chain: Alanine racemase (374 aa).

The active-site Proton acceptor; specific for D-alanine is the Lys34. N6-(pyridoxal phosphate)lysine is present on Lys34. Arg147 is a binding site for substrate. Tyr271 functions as the Proton acceptor; specific for L-alanine in the catalytic mechanism. Met319 is a substrate binding site.

It belongs to the alanine racemase family. It depends on pyridoxal 5'-phosphate as a cofactor.

It catalyses the reaction L-alanine = D-alanine. It participates in amino-acid biosynthesis; D-alanine biosynthesis; D-alanine from L-alanine: step 1/1. Its function is as follows. Catalyzes the interconversion of L-alanine and D-alanine. May also act on other amino acids. This chain is Alanine racemase (alr), found in Actinobacillus pleuropneumoniae serotype 5b (strain L20).